The primary structure comprises 119 residues: Large ribosomal subunit protein bL20 (119 aa).

This sequence belongs to the bacterial ribosomal protein bL20 family.

Functionally, binds directly to 23S ribosomal RNA and is necessary for the in vitro assembly process of the 50S ribosomal subunit. It is not involved in the protein synthesizing functions of that subunit. The sequence is that of Large ribosomal subunit protein bL20 from Clostridium acetobutylicum (strain ATCC 824 / DSM 792 / JCM 1419 / IAM 19013 / LMG 5710 / NBRC 13948 / NRRL B-527 / VKM B-1787 / 2291 / W).